A 1269-amino-acid polypeptide reads, in one-letter code: Protein flightless-1 homolog (1269 aa).

Met-1 is subject to N-acetylmethionine. The interval 1-427 (MEATGVLPFV…SGPKDPMARK (427 aa)) is interaction with LRRFIP1 and LRRFIP2. 16 LRR repeats span residues 7 to 32 (LPFVRGVDLSGNDFKGGYFPENVKAM), 33 to 55 (TSLRWLKLNRTGLCYLPEELAAL), 56 to 78 (QKLEHLSVSHNNLTTLHGELSSL), 80 to 103 (SLRAIVARANSLKNSGVPDDIFKL), 104 to 126 (DDLSVLDLSHNQLTECPRELENA), 127 to 149 (KNMLVLNLSHNSIDTIPNQLFIN), 150 to 173 (LTDLLYLDLSENRLESLPPQMRRL), 175 to 196 (HLQTLVLNGNPLLHAQLRQLPA), 197 to 222 (MTALQTLHLRSTQRTQSNLPTSLEGL), 223 to 245 (SNLADVDLSCNDLTRVPECLYTL), 247 to 268 (SLRRLNLSSNQITELSLCIDQW), 269 to 291 (VHVETLNLSRNQLTSLPSAICKL), 293 to 316 (KLKKLYLNSNKLDFDGLPSGIGKL), 318 to 339 (NLEEFMAANNNLELVPESLCRC), 340 to 363 (PKLRKLVLNKNHLVTLPEAIHFLT), and 365 to 385 (IEVLDVRENPNLVMPPKPADR). Lys-21 is subject to N6-acetyllysine. Ser-406 bears the Phosphoserine mark. Position 436 is a phosphoserine; by SGK3 (Ser-436). Residues 452 to 473 (VAQEKNKKQEESADARAPSGKV) form a disordered region. Positions 453 to 465 (AQEKNKKQEESAD) are enriched in basic and acidic residues. Positions 495 to 827 (VGQLPGLTIW…TVSRSLEGTE (333 aa)) are interaction with ACTL6A. Gelsolin-like repeat units lie at residues 509–591 (FVPV…EEFL), 629–703 (NIKL…PEFW), and 758–831 (ELMP…AQVF). Thr-818 carries the post-translational modification Phosphothreonine; by SGK3. Phosphoserine is present on residues Ser-856 and Ser-860. Positions 951–975 (KKEDKEEKAEGKEGEEATAEAEEKQ) are disordered. Residues 952 to 965 (KEDKEEKAEGKEGE) show a composition bias toward basic and acidic residues. Residues 966 to 975 (EATAEAEEKQ) show a composition bias toward acidic residues. Gelsolin-like repeat units lie at residues 1075 to 1143 (TDSS…PENF) and 1181 to 1254 (KCSD…QHAF).

As to quaternary structure, interacts with actin, ACTL6A, NCOA2 and CARM1. Interacts with LRRFIP1, LRRFIP2 and MYD88. Upon LPS stimulation, LRRFIP2 competes for MYD88-binding. LRRFIP1 constitutively blocks the interaction with MyD88, even in the absence of LPS. Interacts with the nuclear receptors ESR1 and THRB. Interacts with SGK3. Interacts (via the gelsolin-like region) with TMOD1. Interacts with (via the gelsolin-like region) TMOD3. Interacts with LMOD2, VCL, GSN and DES. In terms of tissue distribution, strongest expression in skeletal muscle with high expression also in the heart and lung.

The protein localises to the nucleus. It localises to the cytoplasm. Its subcellular location is the cytoskeleton. It is found in the microtubule organizing center. The protein resides in the centrosome. The protein localises to the cell projection. It localises to the podosome. Its subcellular location is the cell junction. It is found in the focal adhesion. Functionally, is a regulator of actin polymerization, required for proper myofibril organization and regulation of the length of sarcomeric thin filaments. It also plays a role in the assembly of cardiomyocyte cell adhesion complexes. Regulates cytoskeletal rearrangements involved in cytokinesis and cell migration, by inhibiting Rac1-dependent paxillin phosphorylation. May play a role as coactivator in transcriptional activation by hormone-activated nuclear receptors (NR) and acts in cooperation with NCOA2 and CARM1. Involved in estrogen hormone signaling. This is Protein flightless-1 homolog (FLII) from Homo sapiens (Human).